Reading from the N-terminus, the 1476-residue chain is Cystic fibrosis transmembrane conductance regulator (1476 aa).

At 1–77 (MQKSPLEKAS…QLIHALRRCF (77 aa)) the chain is on the cytoplasmic side. A helical membrane pass occupies residues 78–98 (VWRFVFYGVLLYLGEVTKAVQ). The 285-residue stretch at 81–365 (FVFYGVLLYL…TAVQIWYDSL (285 aa)) folds into the ABC transmembrane type-1 1 domain. Residues 99–122 (PVLLGRIIASYDPDNTEERSIAIY) lie on the Extracellular side of the membrane. Residues 123-146 (LGIGLCLLFIVRTLLLHPAIFGLH) form a helical membrane-spanning segment. The Cytoplasmic segment spans residues 147 to 195 (HIGMQMRIAMFSLIYKKTLKLSSRVLDKISIGQLISLLSNNLNKFDEGL). The chain crosses the membrane as a helical span at residues 196–216 (ALAHFIWIAPLQVVLLMGLLW). The Extracellular portion of the chain corresponds to 217–222 (DLLQFS). Residues 223–243 (AFCGLGLLIVLVIFQAILGKM) traverse the membrane as a helical segment. At 244–298 (MVKYRDKRAAKINERLVITSEVIDNIYSVKAYCWESAMEKIIESLREEELKMTRR) the chain is on the cytoplasmic side. A helical membrane pass occupies residues 299–319 (SAYMRFFTSSAFFFSGFFVVF). Residues 320–339 (LSVLPYTVINGIVLRKIFTT) are Extracellular-facing. A helical transmembrane segment spans residues 340 to 358 (ISFCIVLRMSVTRQFPTAV). The Cytoplasmic portion of the chain corresponds to 359-853 (QIWYDSLGMI…YLRYFTLHRG (495 aa)). ATP-binding positions include Trp401, 458–465 (GSTGAGKT), and Gln493. Positions 412–646 (VQLNNDDRKT…RPDFSSKLMG (235 aa)) constitute an ABC transporter 1 domain. Cys524 carries S-palmitoyl cysteine lipidation. Phosphoserine is present on residues Ser549 and Ser660. The interval 654–826 (TEERRSSILT…EEINEEDLKE (173 aa)) is disordered R region. Ser670 carries the post-translational modification Phosphoserine; by PKA. Ser684, Ser698, and Ser710 each carry phosphoserine. Thr715 is modified (phosphothreonine). A phosphoserine mark is found at Ser732, Ser763, Ser785, Ser790, and Ser808. The helical transmembrane segment at 854 to 874 (LFAVLIWCVLVFLVEVAASLF) threads the bilayer. The ABC transmembrane type-1 2 domain occupies 854–1153 (LFAVLIWCVL…SSIDTDSLMR (300 aa)). At 875–913 (VLWLLKNNPVNGGNNGTKIANTSYVVVITSSSFYYIFYI) the chain is on the extracellular side. N-linked (GlcNAc...) asparagine glycans are attached at residues Asn889 and Asn895. A discontinuously helical transmembrane segment spans residues 914–934 (YVGVADTLLALSLFRGLPLVH). Topologically, residues 935–985 (TLITASKILHRKMLHSILHAPMSTFNKLKAGGILNRFSKDIAILDDFLPLT) are cytoplasmic. A helical membrane pass occupies residues 986–1006 (IFDFIQLLFIVVGAIIVVSAL). The Extracellular portion of the chain corresponds to 1007 to 1008 (QP). Residues 1009-1029 (YIFLATVPGLAVFILLRAYFL) traverse the membrane as a helical segment. The Cytoplasmic portion of the chain corresponds to 1030–1090 (HTSQQLKQLE…TANWFMYLAT (61 aa)). Residues 1091–1111 (LRWFQMRIDMIFVLFFIVVTF) form a helical membrane-spanning segment. Residues 1112–1125 (ISILTTGEGEGTTG) lie on the Extracellular side of the membrane. Residues 1126-1146 (IILTLAMNIMSTLQWAVNSSI) traverse the membrane as a helical segment. The Cytoplasmic portion of the chain corresponds to 1147 to 1476 (DTDSLMRSVS…TEEEVQETRL (330 aa)). The ABC transporter 2 domain maps to 1208–1439 (VKDLTVKYVD…KSVFQRALSS (232 aa)). Residues Tyr1215 and 1240-1247 (GRTGSGKS) contribute to the ATP site. The segment at 1382 to 1476 (RVLRQAFAGC…TEEEVQETRL (95 aa)) is interaction with GORASP2. Cys1391 carries the S-palmitoyl cysteine lipid modification. Phosphoserine occurs at positions 1440 and 1452. Residues 1445-1456 (LFHGRHSSKQKP) show a composition bias toward basic residues. Residues 1445 to 1476 (LFHGRHSSKQKPRTQITAVKEETEEEVQETRL) form a disordered region. Positions 1466 to 1476 (ETEEEVQETRL) are enriched in acidic residues. Residues 1474–1476 (TRL) carry the PDZ-binding motif.

It belongs to the ABC transporter superfamily. ABCC family. CFTR transporter (TC 3.A.1.202) subfamily. Monomer; does not require oligomerization for channel activity. May form oligomers in the membrane. Interacts with SLC4A7 through NHERF1. Interacts with SHANK2. Interacts with NHERF1 and MYO6. Interacts (via C-terminus) with GOPC (via PDZ domain); this promotes CFTR internalization and thereby decreases channel activity. Interacts with SLC4A7 through NHERF1. Found in a complex with MYO5B and RAB11A. Interacts with ANO1. Interacts with SLC26A8. Interacts with AHCYL1; the interaction increases CFTR activity. Interacts with CSE1L. The core-glycosylated form interacts with GORASP2 (via PDZ GRASP-type 1 domain) in respone to ER stress. Interacts with MARCHF2; the interaction leads to CFTR ubiqtuitination and degradation. Interacts with ADGRG2. In terms of processing, N-glycosylated. Post-translationally, phosphorylated; cAMP treatment promotes phosphorylation and activates the channel. Dephosphorylation decreases the ATPase activity (in vitro). Phosphorylation at PKA sites activates the channel. Phosphorylation at PKC sites enhances the response to phosphorylation by PKA. Phosphorylated by AMPK; this inhibits channel activity. Ubiquitinated, leading to its degradation in the lysosome. Deubiquitination by USP10 in early endosomes enhances its endocytic recycling to the cell membrane. Ubiquitinated by RNF185 during ER stress. Ubiquitinated by MARCHF2. Detected in epithelial cells in nasopharynx, submandibular gland, pancreas and ileum (at protein level). Expressed in the epididymis. In the caput section of the epididymis, expressed uniformly on both the luminal and basolateral sides of the ducts and on sperm in the caput lumen (at protein level). In the cauda, detected along the luminal border but not continuously and is also expressed on the basolateral surface. Within the caudal lumen, detected on sperm.

It localises to the apical cell membrane. Its subcellular location is the early endosome membrane. The protein resides in the cell membrane. The protein localises to the recycling endosome membrane. It is found in the endoplasmic reticulum membrane. It localises to the nucleus. It catalyses the reaction ATP + H2O + closed Cl(-) channel = ADP + phosphate + open Cl(-) channel.. It carries out the reaction chloride(in) = chloride(out). The catalysed reaction is hydrogencarbonate(in) = hydrogencarbonate(out). The enzyme catalyses ATP + H2O = ADP + phosphate + H(+). Epithelial ion channel that plays an important role in the regulation of epithelial ion and water transport and fluid homeostasis. Mediates the transport of chloride ions across the cell membrane. Possesses an intrinsic ATPase activity and utilizes ATP to gate its channel; the passive flow of anions through the channel is gated by cycles of ATP binding and hydrolysis by the ATP-binding domains. The ion channel is also permeable to HCO(3)(-); selectivity depends on the extracellular chloride concentration. Exerts its function also by modulating the activity of other ion channels and transporters. Contributes to the regulation of the pH and the ion content of the epithelial fluid layer. Modulates the activity of the epithelial sodium channel (ENaC) complex, in part by regulating the cell surface expression of the ENaC complex. May regulate bicarbonate secretion and salvage in epithelial cells by regulating the transporter SLC4A7. Can inhibit the chloride channel activity of ANO1. Plays a role in the chloride and bicarbonate homeostasis during sperm epididymal maturation and capacitation. The protein is Cystic fibrosis transmembrane conductance regulator of Rattus norvegicus (Rat).